The chain runs to 194 residues: Peptide deformylase (194 aa).

The disordered stretch occupies residues 71–93; sequence DAEPEECGHDHGDGEGAHKHYPV. Residues 76-93 show a composition bias toward basic and acidic residues; it reads ECGHDHGDGEGAHKHYPV. Fe cation contacts are provided by Cys119 and His161. The active site involves Glu162. Residue His165 participates in Fe cation binding.

It belongs to the polypeptide deformylase family. The cofactor is Fe(2+).

The catalysed reaction is N-terminal N-formyl-L-methionyl-[peptide] + H2O = N-terminal L-methionyl-[peptide] + formate. In terms of biological role, removes the formyl group from the N-terminal Met of newly synthesized proteins. Requires at least a dipeptide for an efficient rate of reaction. N-terminal L-methionine is a prerequisite for activity but the enzyme has broad specificity at other positions. This is Peptide deformylase from Erythrobacter litoralis (strain HTCC2594).